We begin with the raw amino-acid sequence, 769 residues long: Subtilisin-like protease 3 (769 aa).

N-linked (GlcNAc...) asparagine glycans are attached at residues asparagine 68, asparagine 102, asparagine 108, asparagine 295, asparagine 316, and asparagine 356. Basic residues predominate over residues 293-302; that stretch reads KINHSNKHKN. The tract at residues 293–329 is disordered; that stretch reads KINHSNKHKNNNNNNNNNDYHNNNKSNYHSHSSAKCQ. Positions 303 to 325 are enriched in low complexity; sequence NNNNNNNNDYHNNNKSNYHSHSS. The 412-residue stretch at 345-756 folds into the Peptidase S8 domain; that stretch reads GYDIIQMEEG…GGFINVYDLV (412 aa). The Charge relay system role is filled by aspartate 372. The segment at 468-493 is disordered; sequence NIKSSDNIKSSDNINSSDNIKSSDNN. 2 N-linked (GlcNAc...) asparagine glycosylation sites follow: asparagine 482 and asparagine 515. Residue histidine 523 is the Charge relay system of the active site. N-linked (GlcNAc...) asparagine glycosylation is found at asparagine 584 and asparagine 616. Serine 701 acts as the Charge relay system in catalysis. N-linked (GlcNAc...) asparagine glycosylation is present at asparagine 720.

It belongs to the peptidase S8 family.

Its subcellular location is the secreted. The catalysed reaction is Hydrolysis of proteins with broad specificity for peptide bonds, and a preference for a large uncharged residue in P1. Hydrolyzes peptide amides.. In terms of biological role, serine protease which may cleave PFN/profilin. In Plasmodium falciparum (isolate 3D7), this protein is Subtilisin-like protease 3.